The following is a 793-amino-acid chain: Ribosome biogenesis protein BOP1 homolog (793 aa).

The span at 1–11 (MTKKLTLKRKG) shows a compositional bias: basic residues. Residues 1-168 (MTKKLTLKRK…DSDTSDEEDI (168 aa)) form a disordered region. 3 stretches are compositionally biased toward acidic residues: residues 44 to 53 (EDTTDDEGID), 60 to 72 (SSEDLEFESDEEG), and 83 to 116 (SSEEEDDDGDEEGEEEDEEEDDSEDGESADDGDE). Basic and acidic residues predominate over residues 117–129 (EKPTTSKQNKSED). Residues 133 to 143 (SSKVSKKTQPP) show a composition bias toward polar residues. Basic and acidic residues predominate over residues 146–161 (DLVKRDPSHPEYHDSD). 7 WD repeats span residues 454–495 (GHTD…RTIE), 497–535 (EDVVRCVAWCPNAKLSIIAVATGNRLLLINPKVGDKVLV), 579–621 (NHFK…SQIP), 624–662 (KSKGLIQCVLFHPVKPCFFVATQHNIRIYDLVKQELVKK), 665–704 (TNSKWISGMSIHPKGDNLLVSTYDKKMLWFDLDLSTKPYQ), 708–747 (LHRNAVRSVAFHLRYPLFASGSDDQAVIVSHGMVYNDLLQ), and 763–793 (REDFGVLDVNWHPIQPWIFSTGADCTIRLYT).

Belongs to the WD repeat BOP1/ERB1 family.

It localises to the nucleus. It is found in the nucleolus. The protein localises to the nucleoplasm. In terms of biological role, required for maturation of ribosomal RNAs and formation of the large ribosomal subunit. The chain is Ribosome biogenesis protein BOP1 homolog from Drosophila ananassae (Fruit fly).